A 538-amino-acid chain; its full sequence is MFS-type transporter oryC (538 aa).

Helical transmembrane passes span 14 to 34 (LTGGWLTFWVTVACATDMSLF), 67 to 87 (TVTAIYDVGCFFGAIVAFTIG), 96 to 116 (ILLGTTIMAIGAVLQAASFSL), 120 to 140 (FVGRIILGIGNGINTATAPIW), 162 to 182 (IFGFCLVNWINYGLSFVGGSI), and 186 to 206 (FPLAFQFFFLIILWSTTPWLP). Asn-268 is a glycosylation site (N-linked (GlcNAc...) asparagine). The next 6 membrane-spanning stretches (helical) occupy residues 288–308 (FGGINIMSYYLPTVLMDSVGL), 315–335 (LLAACNALSYLVFSGLAVLLV), 342–362 (GLMLLSTFGQFLCFLIITILL), 379–399 (VAFFFLYYGAFGIGMLGVPWL), 416–436 (VATATDWITNFVVVEITPIGI), and 443–463 (FWIVWTVTNAAFLPILYFLYP). A glycan (N-linked (GlcNAc...) asparagine) is linked at Asn-467.

This sequence belongs to the major facilitator superfamily. Sugar transporter (TC 2.A.1.1) family.

It localises to the membrane. MFS-type transporter; part of the gene cluster that mediates the biosynthesis of oryzines, natural products with an unusual maleidride backbone. This is MFS-type transporter oryC from Aspergillus oryzae (strain ATCC 42149 / RIB 40) (Yellow koji mold).